The sequence spans 549 residues: Cation/acetate symporter ActP (549 aa).

A run of 13 helical transmembrane segments spans residues 33-53 (WQAIIMFLIFVVFTLGITYWA), 77-97 (LAIAGDYMSAASFLGISALVF), 103-123 (GLIYSLGFLVGWPIILFLIAE), 148-168 (ILSACGSLVVVALYLIAQMVG), 183-203 (IAVVLVGVLMMMYVLFGGMLA), 206-226 (WVQIIKAVLLLFGASFMAFMV), 262-282 (ISALSLGLGLMFGTAGLPHIL), 303-323 (GFMGYFYILTFIIGFGAIMLV), 355-375 (LFLGFISAVAFATILAVVAGL), 404-424 (VSKITVLVLGVIAIILGFLFE), 428-448 (IAFMVGLAFAIAASCNFPIIL), 464-484 (GGWLGLLTAVVLMILGPTIWV), and 493-513 (IFPYEYPALFSISVAFLGIWF).

The protein belongs to the sodium:solute symporter (SSF) (TC 2.A.21) family.

It is found in the cell inner membrane. Functionally, transports acetate. The sequence is that of Cation/acetate symporter ActP from Salmonella paratyphi C (strain RKS4594).